A 207-amino-acid polypeptide reads, in one-letter code: dTTP/UTP pyrophosphatase (207 aa).

Catalysis depends on D79, which acts as the Proton acceptor.

It belongs to the Maf family. YhdE subfamily. Requires a divalent metal cation as cofactor.

The protein resides in the cytoplasm. It carries out the reaction dTTP + H2O = dTMP + diphosphate + H(+). The enzyme catalyses UTP + H2O = UMP + diphosphate + H(+). Nucleoside triphosphate pyrophosphatase that hydrolyzes dTTP and UTP. May have a dual role in cell division arrest and in preventing the incorporation of modified nucleotides into cellular nucleic acids. This chain is dTTP/UTP pyrophosphatase, found in Nitrobacter winogradskyi (strain ATCC 25391 / DSM 10237 / CIP 104748 / NCIMB 11846 / Nb-255).